A 256-amino-acid chain; its full sequence is Triosephosphate isomerase (256 aa).

Substrate is bound at residue 10-12 (NWK). The Electrophile role is filled by H97. E169 serves as the catalytic Proton acceptor. Residues G175, S214, and 235–236 (GG) each bind substrate.

The protein belongs to the triosephosphate isomerase family. In terms of assembly, homodimer.

The protein localises to the cytoplasm. The catalysed reaction is D-glyceraldehyde 3-phosphate = dihydroxyacetone phosphate. It participates in carbohydrate biosynthesis; gluconeogenesis. Its pathway is carbohydrate degradation; glycolysis; D-glyceraldehyde 3-phosphate from glycerone phosphate: step 1/1. Its function is as follows. Involved in the gluconeogenesis. Catalyzes stereospecifically the conversion of dihydroxyacetone phosphate (DHAP) to D-glyceraldehyde-3-phosphate (G3P). The sequence is that of Triosephosphate isomerase from Haemophilus ducreyi (strain 35000HP / ATCC 700724).